The primary structure comprises 292 residues: MEITASLVKELRERTGAGMMECKKALVENAGDIDAAAEWLRKSGLAKADKKADRVAAEGRIATAQAGGKAVLVEVNSETDFVAKDENFLAFTEVVANAALNSDAADAEALKSVKLDSGETIEERRAAVIAKVGENLQVRRLVRIDSANNVAAYVHGGRIGVLVELKGGDIELARGIAMHIAAMNPPHVKASDVPAEFVAKEKEIELAKMSEKDKAKPAEILEKIISGKISKIVNEVTLYGQPYVLNTDQTVEQAVKAAGADVIGFQRLAVGEGIEKVVEDYAAEVMKQAGLA.

Residues 79 to 82 (TDFV) are involved in Mg(2+) ion dislocation from EF-Tu.

This sequence belongs to the EF-Ts family.

It is found in the cytoplasm. Functionally, associates with the EF-Tu.GDP complex and induces the exchange of GDP to GTP. It remains bound to the aminoacyl-tRNA.EF-Tu.GTP complex up to the GTP hydrolysis stage on the ribosome. This is Elongation factor Ts from Xanthomonas euvesicatoria pv. vesicatoria (strain 85-10) (Xanthomonas campestris pv. vesicatoria).